Here is a 248-residue protein sequence, read N- to C-terminus: MEAVILFPAIDLKNGQCVRLEQGDMARATVFNLNPAAQAQSFAEQGFEYLHVVDLDGAFAGKPVNAQAVEAMLKTIKIPVQLGGGIRDLATVEAWLEKGITRVIIGTAAVRDPDLVKAAAKKFPGRVAVGLDARDGKVAVEGWAETSQVTALEIAQRFEDAGVAAIIFTDIARDGLLKGLNLDATIALADSISIPVIASGGLASIDDVKAMLTPRAKKLAGAIAGRALYDGRLDPAAALTLIRNARAA.

Asp-11 functions as the Proton acceptor in the catalytic mechanism. Catalysis depends on Asp-132, which acts as the Proton donor.

The protein belongs to the HisA/HisF family.

The protein localises to the cytoplasm. It catalyses the reaction 1-(5-phospho-beta-D-ribosyl)-5-[(5-phospho-beta-D-ribosylamino)methylideneamino]imidazole-4-carboxamide = 5-[(5-phospho-1-deoxy-D-ribulos-1-ylimino)methylamino]-1-(5-phospho-beta-D-ribosyl)imidazole-4-carboxamide. It functions in the pathway amino-acid biosynthesis; L-histidine biosynthesis; L-histidine from 5-phospho-alpha-D-ribose 1-diphosphate: step 4/9. The polypeptide is 1-(5-phosphoribosyl)-5-[(5-phosphoribosylamino)methylideneamino] imidazole-4-carboxamide isomerase (Bradyrhizobium diazoefficiens (strain JCM 10833 / BCRC 13528 / IAM 13628 / NBRC 14792 / USDA 110)).